The primary structure comprises 303 residues: Monoglyceride lipase (303 aa).

Position 10 is a phosphothreonine (T10). Y58 bears the 3'-nitrotyrosine mark. The active-site Nucleophile is the S122. Phosphoserine is present on S189. Residues D239 and H269 each act as charge relay system in the active site.

This sequence belongs to the AB hydrolase superfamily. Monoacylglycerol lipase family. Homodimer. In terms of tissue distribution, ubiquitous. Highly expressed in adipose tissue, adrenal gland, ovary, heart, spleen, lung, skeletal muscle, kidney and testis. Highly expressed throughout the brain.

Its subcellular location is the cytoplasm. The protein localises to the cytosol. It localises to the membrane. It catalyses the reaction Hydrolyzes glycerol monoesters of long-chain fatty acids.. It carries out the reaction a 1-acylglycerol + H2O = glycerol + a fatty acid + H(+). The catalysed reaction is a 2-acylglycerol + H2O = glycerol + a fatty acid + H(+). The enzyme catalyses 1-octanoylglycerol + H2O = octanoate + glycerol + H(+). It catalyses the reaction 2-(5Z,8Z,11Z,14Z-eicosatetraenoyl)-glycerol + H2O = glycerol + (5Z,8Z,11Z,14Z)-eicosatetraenoate + H(+). It carries out the reaction 1-decanoylglycerol + H2O = decanoate + glycerol + H(+). The catalysed reaction is 1-dodecanoylglycerol + H2O = dodecanoate + glycerol + H(+). The enzyme catalyses 1-tetradecanoylglycerol + H2O = tetradecanoate + glycerol + H(+). It catalyses the reaction 2-hexadecanoylglycerol + H2O = glycerol + hexadecanoate + H(+). It carries out the reaction 1-(9Z-octadecenoyl)-glycerol + H2O = glycerol + (9Z)-octadecenoate + H(+). The catalysed reaction is 2-(9Z-octadecenoyl)-glycerol + H2O = glycerol + (9Z)-octadecenoate + H(+). The enzyme catalyses 2-(9Z,12Z-octadecadienoyl)-glycerol + H2O = (9Z,12Z)-octadecadienoate + glycerol + H(+). It catalyses the reaction 1-(5Z,8Z,11Z,14Z-eicosatetraenoyl)-glycerol + H2O = glycerol + (5Z,8Z,11Z,14Z)-eicosatetraenoate + H(+). It carries out the reaction 1-(9Z,12Z-octadecadienoyl)-glycerol + H2O = (9Z,12Z)-octadecadienoate + glycerol + H(+). The catalysed reaction is 1-hexadecanoylglycerol + H2O = glycerol + hexadecanoate + H(+). The enzyme catalyses 1-octadecanoylglycerol + H2O = octadecanoate + glycerol + H(+). It catalyses the reaction prostaglandin E2 1-glyceryl ester + H2O = prostaglandin E2 + glycerol + H(+). It carries out the reaction prostaglandin D2-1-glycerol ester + H2O = prostaglandin D2 + glycerol + H(+). The catalysed reaction is 2-glyceryl-15-deoxy-Delta(12,14)-prostaglandin J2 + H2O = 15-deoxy-Delta(12,14)-prostaglandin J2 + glycerol + H(+). The enzyme catalyses prostaglandin F2alpha 1-glyceryl ester + H2O = prostaglandin F2alpha + glycerol + H(+). The protein operates within glycerolipid metabolism; triacylglycerol degradation. In terms of biological role, converts monoacylglycerides to free fatty acids and glycerol. Hydrolyzes the endocannabinoid 2-arachidonoylglycerol, and thereby contributes to the regulation of endocannabinoid signaling, nociperception and perception of pain. Regulates the levels of fatty acids that serve as signaling molecules and promote cancer cell migration, invasion and tumor growth. This Rattus norvegicus (Rat) protein is Monoglyceride lipase.